The primary structure comprises 182 residues: Ribosome-recycling factor (182 aa).

The protein belongs to the RRF family.

The protein localises to the cytoplasm. Functionally, responsible for the release of ribosomes from messenger RNA at the termination of protein biosynthesis. May increase the efficiency of translation by recycling ribosomes from one round of translation to another. The protein is Ribosome-recycling factor of Hydrogenobaculum sp. (strain Y04AAS1).